The following is a 40-amino-acid chain: Protein YneP (40 aa).

The protein is Protein YneP of Escherichia coli (strain K12).